Here is a 480-residue protein sequence, read N- to C-terminus: Glutamate--tRNA ligase (480 aa).

Residues 21–31 carry the 'HIGH' region motif; the sequence is PSPTGYLHVGG. Residues cysteine 110, cysteine 112, cysteine 137, and histidine 139 each coordinate Zn(2+). The 'KMSKS' region signature appears at 248-252; that stretch reads KLSKR. Lysine 251 is an ATP binding site.

Belongs to the class-I aminoacyl-tRNA synthetase family. Glutamate--tRNA ligase type 1 subfamily. As to quaternary structure, monomer. It depends on Zn(2+) as a cofactor.

It localises to the cytoplasm. It catalyses the reaction tRNA(Glu) + L-glutamate + ATP = L-glutamyl-tRNA(Glu) + AMP + diphosphate. Catalyzes the attachment of glutamate to tRNA(Glu) in a two-step reaction: glutamate is first activated by ATP to form Glu-AMP and then transferred to the acceptor end of tRNA(Glu). This is Glutamate--tRNA ligase from Histophilus somni (strain 129Pt) (Haemophilus somnus).